Reading from the N-terminus, the 106-residue chain is Replication protein A 14 kDa subunit B (106 aa).

Met1 is modified (N-acetylmethionine).

It belongs to the replication factor A protein 3 family. As to quaternary structure, component of the heterotrimeric canonical replication protein A complex (RPA).

The protein localises to the nucleus. Functionally, as part of the replication protein A (RPA/RP-A), a single-stranded DNA-binding heterotrimeric complex, may play an essential role in DNA replication, recombination and repair. Binds and stabilizes single-stranded DNA intermediates, preventing complementary DNA reannealing and recruiting different proteins involved in DNA metabolism. The sequence is that of Replication protein A 14 kDa subunit B (RPA3B) from Arabidopsis thaliana (Mouse-ear cress).